We begin with the raw amino-acid sequence, 238 residues long: Ribitol-5-phosphate cytidylyltransferase (238 aa).

CTP-binding positions include 7 to 10 and 81 to 87; these read LAGG and GSDRNET.

The protein belongs to the IspD/TarI cytidylyltransferase family. TarI subfamily.

The catalysed reaction is D-ribitol 5-phosphate + CTP + H(+) = CDP-L-ribitol + diphosphate. It functions in the pathway cell wall biogenesis; poly(ribitol phosphate) teichoic acid biosynthesis. Its function is as follows. Catalyzes the transfer of the cytidylyl group of CTP to D-ribitol 5-phosphate. In Staphylococcus saprophyticus subsp. saprophyticus (strain ATCC 15305 / DSM 20229 / NCIMB 8711 / NCTC 7292 / S-41), this protein is Ribitol-5-phosphate cytidylyltransferase.